Reading from the N-terminus, the 447-residue chain is MAGAGGGNDIQWCFSQVKGAVDDDVAEADIISTVEFNHSGELLATGDKGGRVVIFQQEQENKIQSHSRGEYNVYSTFQSHEPEFDYLKSLEIEEKINKIRWLPQKNAAQFLLSTNDKTIKLWKISERDKRPEGYNLKEEDGRYRDPTTVTTLRVPVFRPMDLMVEASPRRIFANAHTYHINSISINSDYETYLSADDLRINLWHLEITDRSFNIVDIKPANMEELTEVITAAEFHPNSCNTFVYSSSKGTIRLCDMRASALCDRHSKLFEEPEDPSNRSFFSEIISSISDVKFSHSGRYMMTRDYLSVKIWDLNMENRPVETYQVHEYLRSKLCSLYENDCIFDKFECCWNGSDSVVMTGSYNNFFRMFDRNTKRDITLEASRENNKPRTVLKPRKVCASGKRKKDEISVDSLDFNKKILHTAWHPKENIIAVATTNNLYIFQDKVN.

An N-acetylalanine modification is found at alanine 2. 7 WD repeats span residues 11–80 (QWCF…FQSH), 94–174 (EKIN…IFAN), 175–218 (AHTY…VDIK), 227–270 (EVIT…KLFE), 288–325 (ISDV…TYQV), 347–381 (ECCW…TLEA), and 414–446 (DFNK…QDKV).

The protein belongs to the phosphatase 2A regulatory subunit B family. PP2A consists of a common heterodimeric core enzyme, composed of a 36 kDa catalytic subunit (subunit C) and a 65 kDa constant regulatory subunit (PR65 or subunit A), that associates with a variety of regulatory subunits. Proteins that associate with the core dimer include three families of regulatory subunits B (the R2/B/PR55/B55, R3/B''/PR72/PR130/PR59 and R5/B'/B56 families), the 48 kDa variable regulatory subunit, viral proteins, and cell signaling molecules. Interacts with the PP2A C catalytic subunit PPP2CA. Interacts with the PP2A A subunit PPP2R1A. Interacts with TP53. Interacts with IER5. Interacts with MFHAS1; the interaction is direct. Interacts with PABIR1/FAM122A (via its N-terminus); the interaction is direct and inhibits PP2A activity. Interacts with ARPP19; the interaction is direct and inhibits PP2A activity. Interacts with CRTC3. As to expression, expressed in all tissues examined.

In terms of biological role, substrate-recognition subunit of protein phosphatase 2A (PP2A) that plays a key role in cell cycle by controlling mitosis entry and exit. Involved in chromosome clustering during late mitosis by mediating dephosphorylation of MKI67. Essential for serine/threonine-protein phosphatase 2A-mediated dephosphorylation of WEE1, preventing its ubiquitin-mediated proteolysis, increasing WEE1 protein levels, and promoting the G2/M checkpoint. This chain is Serine/threonine-protein phosphatase 2A 55 kDa regulatory subunit B alpha isoform (PPP2R2A), found in Homo sapiens (Human).